The primary structure comprises 382 residues: MTAQLNKVRKAIINGCNPAMISDLLDDLQDKHVLKDYEVEHINKKNNTSRDRCRDMIDSVKKKGEYSSNILLESLVKNHKTLAESLGLHEHAPSPIQEHNEDTIKDKEINSVIPCSAEEFKNIYDSHGDKIYEVREREGRKRLALIICNETFQSMSERRGAKLDLEGMNKLLNELGYQVQQHTNLTKAEMVKAMKEFAAREEHADSDSTFIVLMSHGDKPGVCGTDSKKTENGQYGVTNLLQVDEIFSTFNNVNCSRLWDKPKVIIIQACRGENQGGELVRDDVAPAPLEDDAVHHVQTETDSICFYSSTPDTASWRNPTKGSVFIIRLIEKMNELAHCQPLGDIFLEVQSSFKDKSPNQYSQMPTQERSTMTKKFYLFPGY.

The propeptide occupies 1–98 (MTAQLNKVRK…HEHAPSPIQE (98 aa)). Active-site residues include His216 and Cys270. The propeptide occupies 283-292 (DVAPAPLEDD).

It belongs to the peptidase C14A family. Heterotetramer that consists of two anti-parallel arranged heterodimers, each one formed by a 20 kDa (Caspase-1 subunit p20) and a 10 kDa (Caspase-1 subunit p10) subunit. In terms of assembly, heterotetramer that consists of two anti-parallel arranged heterodimers, each one formed by a 20 kDa (Caspase-1 subunit p20) and a 10 kDa (Caspase-1 subunit p10) subunit. Can form a heterodimer with isoform epsilon which then has an inhibitory effect. Post-translationally, the two subunits are derived from the precursor sequence by an autocatalytic mechanism.

It is found in the cytoplasm. The protein localises to the cell membrane. It catalyses the reaction Strict requirement for an Asp residue at position P1 and has a preferred cleavage sequence of Tyr-Val-Ala-Asp-|-.. In terms of biological role, thiol protease involved in a variety of inflammatory processes by proteolytically cleaving other proteins, such as the precursors of the inflammatory cytokines interleukin-1 beta (IL1B) and interleukin 18 (IL18) as well as the pyroptosis inducer Gasdermin-D (GSDMD), into active mature peptides. Plays a key role in cell immunity as an inflammatory response initiator: once activated through formation of an inflammasome complex, it initiates a pro-inflammatory response through the cleavage of the two inflammatory cytokines IL1B and IL18, releasing the mature cytokines which are involved in a variety of inflammatory processes. Cleaves a tetrapeptide after an Asp residue at position P1. Also initiates pyroptosis, a programmed lytic cell death pathway, through cleavage of GSDMD. This is Caspase-1-B (casp1-b) from Xenopus laevis (African clawed frog).